Reading from the N-terminus, the 118-residue chain is UPF0344 protein BLi01172/BL01343 (118 aa).

4 helical membrane passes run 6-26 (ITSW…YSSG), 33-53 (ITHM…AQLF), 62-82 (EYIA…MLLI), and 89-109 (AATG…VLGL).

The protein belongs to the UPF0344 family.

It localises to the cell membrane. The polypeptide is UPF0344 protein BLi01172/BL01343 (Bacillus licheniformis (strain ATCC 14580 / DSM 13 / JCM 2505 / CCUG 7422 / NBRC 12200 / NCIMB 9375 / NCTC 10341 / NRRL NRS-1264 / Gibson 46)).